The chain runs to 474 residues: Sialyltransferase-like protein 1 (474 aa).

At Met-1–Gln-14 the chain is on the cytoplasmic side. Residues Leu-15–Ala-35 form a helical; Signal-anchor for type II membrane protein membrane-spanning segment. The Lumenal portion of the chain corresponds to Asp-36 to Thr-474. N-linked (GlcNAc...) asparagine glycosylation is found at Asn-88, Asn-120, Asn-155, and Asn-243. The segment at Arg-376–Lys-421 is disordered.

Belongs to the glycosyltransferase 29 family. Highly expressed in inflorescences and siliques and at lower levels in roots, leaves and stems.

Its subcellular location is the golgi apparatus membrane. In terms of biological role, required for normal pollen grain germination and pollen tube growth. May not be required for pollen development and female gametophytic function. This chain is Sialyltransferase-like protein 1, found in Arabidopsis thaliana (Mouse-ear cress).